Here is a 513-residue protein sequence, read N- to C-terminus: Ribonuclease Y (513 aa).

A helical transmembrane segment spans residues 4–24 (NTAIIIAITTGFVAFIGGYFL). One can recognise a KH domain in the interval 203–266 (TVAVIPLPNE…ETARMALEKL (64 aa)). Residues 329–422 (VLKHSVEVAY…IQAADAISAA (94 aa)) enclose the HD domain.

Belongs to the RNase Y family.

The protein localises to the cell membrane. In terms of biological role, endoribonuclease that initiates mRNA decay. The protein is Ribonuclease Y of Desulforudis audaxviator (strain MP104C).